Here is a 277-residue protein sequence, read N- to C-terminus: 2,3,4,5-tetrahydropyridine-2,6-dicarboxylate N-succinyltransferase (277 aa).

The substrate site is built by arginine 106 and aspartate 143.

The protein belongs to the transferase hexapeptide repeat family. As to quaternary structure, homotrimer.

It localises to the cytoplasm. The enzyme catalyses (S)-2,3,4,5-tetrahydrodipicolinate + succinyl-CoA + H2O = (S)-2-succinylamino-6-oxoheptanedioate + CoA. It functions in the pathway amino-acid biosynthesis; L-lysine biosynthesis via DAP pathway; LL-2,6-diaminopimelate from (S)-tetrahydrodipicolinate (succinylase route): step 1/3. The protein is 2,3,4,5-tetrahydropyridine-2,6-dicarboxylate N-succinyltransferase of Xylella fastidiosa (strain 9a5c).